Here is a 128-residue protein sequence, read N- to C-terminus: Small ribosomal subunit protein uS9 (128 aa).

The disordered stretch occupies residues 107 to 128; it reads RAVERKKPGRPKARKRFQFSKR. The segment covering 113-128 has biased composition (basic residues); the sequence is KPGRPKARKRFQFSKR.

It belongs to the universal ribosomal protein uS9 family.

The sequence is that of Small ribosomal subunit protein uS9 from Parabacteroides distasonis (strain ATCC 8503 / DSM 20701 / CIP 104284 / JCM 5825 / NCTC 11152).